A 369-amino-acid chain; its full sequence is Endoglucanase (369 aa).

An N-terminal signal peptide occupies residues 1 to 22 (MMTMLRGWITMIVMLTAINAQA). The Proton donor role is filled by Glu-56. Residue Asp-117 is the Nucleophile of the active site.

This sequence belongs to the glycosyl hydrolase 8 (cellulase D) family.

It localises to the secreted. It catalyses the reaction Endohydrolysis of (1-&gt;4)-beta-D-glucosidic linkages in cellulose, lichenin and cereal beta-D-glucans.. It functions in the pathway glycan metabolism; bacterial cellulose biosynthesis. Functionally, hydrolyzes carboxymethylcellulose. This is Endoglucanase (bcsZ) from Salmonella typhi.